We begin with the raw amino-acid sequence, 149 residues long: Large ribosomal subunit protein bL9 (149 aa).

Belongs to the bacterial ribosomal protein bL9 family.

Functionally, binds to the 23S rRNA. This Actinobacillus pleuropneumoniae serotype 3 (strain JL03) protein is Large ribosomal subunit protein bL9.